Consider the following 171-residue polypeptide: UPF0725 protein At3g25080 (171 aa).

The protein belongs to the UPF0725 (EMB2204) family.

This Arabidopsis thaliana (Mouse-ear cress) protein is UPF0725 protein At3g25080.